The primary structure comprises 20 residues: Protein PR-L1 (20 aa).

This sequence belongs to the BetVI family.

This Lupinus luteus (European yellow lupine) protein is Protein PR-L1.